We begin with the raw amino-acid sequence, 150 residues long: Group IIC secretory phospholipase A2 (150 aa).

An N-terminal signal peptide occupies residues 1–20; that stretch reads MKGIAIFLVFIFYWTTSTLS. 8 cysteine pairs are disulfide-bonded: Cys46-Cys143, Cys48-Cys64, Cys63-Cys121, Cys69-Cys150, Cys70-Cys114, Cys79-Cys107, Cys97-Cys112, and Cys99-Cys105. Residues Tyr47, Gly49, and Gly51 each contribute to the Ca(2+) site. His67 is an active-site residue. Asp68 contributes to the Ca(2+) binding site. Residue Asn92 is glycosylated (N-linked (GlcNAc...) asparagine). Residue Asp115 is part of the active site.

This sequence belongs to the phospholipase A2 family. Requires Ca(2+) as cofactor. Testis specific.

It localises to the secreted. It carries out the reaction a 1,2-diacyl-sn-glycero-3-phosphocholine + H2O = a 1-acyl-sn-glycero-3-phosphocholine + a fatty acid + H(+). In terms of biological role, PA2 catalyzes the calcium-dependent hydrolysis of the 2-acyl groups in 3-sn-phosphoglycerides. Testis PA2 may be important in the production of prostaglandins, by the release of arachidonic acid, which in turn are necessary for the contractions of the seminiferous tubules and the testicular capsule; they also seem to decrease sperm transit time through the male reproductive tract. The protein is Group IIC secretory phospholipase A2 (Pla2g2c) of Mus musculus (Mouse).